The sequence spans 658 residues: Exoribonuclease 2 (658 aa).

The region spanning 189–530 (REDLTSLYFT…VNHRLIKQVL (342 aa)) is the RNB domain. The region spanning 576–658 (AVEFDCEIAD…ETRSIVGNII (83 aa)) is the S1 motif domain.

This sequence belongs to the RNR ribonuclease family. RNase II subfamily.

It localises to the cytoplasm. It catalyses the reaction Exonucleolytic cleavage in the 3'- to 5'-direction to yield nucleoside 5'-phosphates.. Its function is as follows. Involved in mRNA degradation. Hydrolyzes single-stranded polyribonucleotides processively in the 3' to 5' direction. The polypeptide is Exoribonuclease 2 (Actinobacillus pleuropneumoniae serotype 3 (strain JL03)).